A 225-amino-acid chain; its full sequence is MVKVKFLGHAAFYIEGSKKILIDPFLTGNPQAAARPEDFKDVDLILVTHAHGDHLGDAGEIARISGAKIVAMYDLANYISEKYKDVETIGMNYGPTEIDGVFIVQVPAWHSSSDGKYSIGNPSGYIVKLDDVTIYHAGDTYVFKDMELFAELYGPIDVALLPIGGHFTMGVREAAKAVELLKPRKVVPMHYNTWPPISADPEEFKRLVGDKAEVVILKPGEELKL.

It belongs to the UPF0173 family.

In Pyrococcus horikoshii (strain ATCC 700860 / DSM 12428 / JCM 9974 / NBRC 100139 / OT-3), this protein is UPF0173 metal-dependent hydrolase PH1671.